The sequence spans 79 residues: DNA-directed RNA polymerase subunit omega (79 aa).

This sequence belongs to the RNA polymerase subunit omega family. In terms of assembly, the RNAP catalytic core consists of 2 alpha, 1 beta, 1 beta' and 1 omega subunit. When a sigma factor is associated with the core the holoenzyme is formed, which can initiate transcription.

It catalyses the reaction RNA(n) + a ribonucleoside 5'-triphosphate = RNA(n+1) + diphosphate. In terms of biological role, promotes RNA polymerase assembly. Latches the N- and C-terminal regions of the beta' subunit thereby facilitating its interaction with the beta and alpha subunits. The sequence is that of DNA-directed RNA polymerase subunit omega from Thermotoga petrophila (strain ATCC BAA-488 / DSM 13995 / JCM 10881 / RKU-1).